A 154-amino-acid polypeptide reads, in one-letter code: Small heat shock protein IbpB (154 aa).

The region spanning 26–137 (GQEPQGFPPY…QPQRIAIGSA (112 aa)) is the sHSP domain.

It belongs to the small heat shock protein (HSP20) family. As to quaternary structure, homodimer. Forms homomultimers of about 100-150 subunits at optimal growth temperatures. Conformation changes to oligomers at high temperatures or high ionic concentrations. The decrease in size of the multimers is accompanied by an increase in chaperone activity.

It is found in the cytoplasm. Functionally, associates with aggregated proteins, together with IbpA, to stabilize and protect them from irreversible denaturation and extensive proteolysis during heat shock and oxidative stress. Aggregated proteins bound to the IbpAB complex are more efficiently refolded and reactivated by the ATP-dependent chaperone systems ClpB and DnaK/DnaJ/GrpE. Its activity is ATP-independent. This Yersinia pseudotuberculosis serotype O:1b (strain IP 31758) protein is Small heat shock protein IbpB.